A 116-amino-acid polypeptide reads, in one-letter code: Host transcription reprogramming factor 4 (116 aa).

The signal sequence occupies residues 1–24 (MHIIHISKFMALLAISTIAIPTRG). The interval 24-53 (GRSEVDSRDVNQAQTVTSGSSIAPSGSEKR) is disordered. The span at 33–47 (VNQAQTVTSGSSIAP) shows a compositional bias: polar residues. The segment at 74 to 96 (FQCPHCKDGISNRVALYTHVKAF) adopts a C2H2-type; degenerate zinc-finger fold.

It is found in the secreted. It localises to the host nucleus. Functionally, probable secreted effector that translocates into the nuclei of host cells to reprogram the expression of targeted genes by binding on effector binding elements in rice. This chain is Host transcription reprogramming factor 4, found in Pyricularia oryzae (strain 70-15 / ATCC MYA-4617 / FGSC 8958) (Rice blast fungus).